A 527-amino-acid chain; its full sequence is Glutamate--cysteine ligase (527 aa).

The protein belongs to the glutamate--cysteine ligase type 1 family. Type 1 subfamily.

The catalysed reaction is L-cysteine + L-glutamate + ATP = gamma-L-glutamyl-L-cysteine + ADP + phosphate + H(+). It functions in the pathway sulfur metabolism; glutathione biosynthesis; glutathione from L-cysteine and L-glutamate: step 1/2. The protein is Glutamate--cysteine ligase of Pseudomonas aeruginosa (strain ATCC 15692 / DSM 22644 / CIP 104116 / JCM 14847 / LMG 12228 / 1C / PRS 101 / PAO1).